A 243-amino-acid polypeptide reads, in one-letter code: MGFEETELRLGLPGNGGTEEVLIRKRGFSETETGHEDESATTVDLMLNLSSKEAATTAAAAADPTDKHKTLPKEKTLLPADPAKPPAKTQVVGWPPVRSFRKNMLAVQKSVGEESEKNSSPNASFVKVSMDGAPYLRKVDLKMYKSYRELSDSLGKMFSSFTFGNCESQGMKDFMNESKLNDLLNSSDYVPTYEDKDGDWMLVGDVPWEMFVESCKRLRIMKGKEAIGLGLAPRAMAKCKNRS.

The EAR-like (transcriptional repression) signature appears at 8 to 12 (LRLGL). Residues 54 to 91 (AATTAAAAADPTDKHKTLPKEKTLLPADPAKPPAKTQV) form a disordered region. A compositionally biased stretch (basic and acidic residues) spans 64-76 (PTDKHKTLPKEKT). Over residues 77–89 (LLPADPAKPPAKT) the composition is skewed to low complexity. The PB1 domain occupies 123-223 (ASFVKVSMDG…SCKRLRIMKG (101 aa)).

The protein belongs to the Aux/IAA family. Homodimers and heterodimers.

It is found in the nucleus. Functionally, aux/IAA proteins are short-lived transcriptional factors that function as repressors of early auxin response genes at low auxin concentrations. Repression is thought to result from the interaction with auxin response factors (ARFs), proteins that bind to the auxin-responsive promoter element (AuxRE). Formation of heterodimers with ARF proteins may alter their ability to modulate early auxin response genes expression. This chain is Auxin-induced protein AUX28 (AUX28), found in Glycine max (Soybean).